A 168-amino-acid polypeptide reads, in one-letter code: Urease accessory protein UreE (168 aa).

Positions 137–168 are disordered; sequence PESGAYHGTTGHGGGHSHSHGHSHDHHHDHSH. Residues 151–161 show a composition bias toward basic residues; the sequence is GHSHSHGHSHD.

It belongs to the UreE family.

Its subcellular location is the cytoplasm. In terms of biological role, involved in urease metallocenter assembly. Binds nickel. Probably functions as a nickel donor during metallocenter assembly. This Saccharophagus degradans (strain 2-40 / ATCC 43961 / DSM 17024) protein is Urease accessory protein UreE.